The chain runs to 134 residues: Larval cuticle protein A3A (134 aa).

Copy 1 of the repeat occupies 23–26 (AAPV). Positions 38–80 (DPHPQYSYGYDIQDGLTGDSKNQQETRDGDVVQGSYSLVDPDG) are disordered. A Chitin-binding type R&amp;R domain is found at 40-106 (HPQYSYGYDI…AVVHREPLVA (67 aa)). Repeat unit 2 spans residues 111–114 (AAPA).

In terms of biological role, component of the cuticle of the larva of Tenebrio molitor. The protein is Larval cuticle protein A3A of Tenebrio molitor (Yellow mealworm beetle).